A 455-amino-acid chain; its full sequence is L-serine dehydratase (455 aa).

It belongs to the iron-sulfur dependent L-serine dehydratase family. [4Fe-4S] cluster is required as a cofactor.

The enzyme catalyses L-serine = pyruvate + NH4(+). It functions in the pathway carbohydrate biosynthesis; gluconeogenesis. This chain is L-serine dehydratase (sdaA), found in Haemophilus influenzae (strain ATCC 51907 / DSM 11121 / KW20 / Rd).